Here is a 179-residue protein sequence, read N- to C-terminus: MVVGAFPMAKLLYLGIRQVSKPLANRIKEAARRSEFFKTYICLPPAQLYHWVEMRTKMRIMGFRGTVIKPLNEEAAAELGAELLGEATIFIVGGGCLVLEYWRHQAQQRHKEEEQRAAWNALRDEVGHLALALEALQAQVQAAPPQGALEELRTELQEVRAQLCNPGRSASHAVPASKK.

Positions 103–163 form a coiled coil; it reads RHQAQQRHKE…TELQEVRAQL (61 aa).

Belongs to the OPA3 family. In terms of tissue distribution, ubiquitous. Most prominent expression in skeletal muscle and kidney.

It is found in the mitochondrion. May play some role in mitochondrial processes. This Homo sapiens (Human) protein is Optic atrophy 3 protein (OPA3).